Consider the following 500-residue polypeptide: Intracellular exo-alpha-(1-&gt;5)-L-arabinofuranosidase (500 aa).

3 residues coordinate alpha-L-arabinofuranose: Glu-28, Asn-73, and Asn-173. Glu-174 functions as the Proton donor/acceptor in the catalytic mechanism. Positions 245, 293, and 350 each coordinate alpha-L-arabinofuranose. Glu-293 functions as the Nucleophile in the catalytic mechanism.

Belongs to the glycosyl hydrolase 51 family. Homohexamer; trimer of dimers.

It localises to the cytoplasm. It catalyses the reaction Hydrolysis of terminal non-reducing alpha-L-arabinofuranoside residues in alpha-L-arabinosides.. It participates in glycan metabolism; L-arabinan degradation. In terms of biological role, involved in the degradation of arabinan and is a key enzyme in the complete degradation of the plant cell wall. Catalyzes the cleavage of terminal alpha-(1-&gt;5)-arabinofuranosyl bonds in different hemicellulosic homopolysaccharides (branched and debranched arabinans). In Halalkalibacterium halodurans (strain ATCC BAA-125 / DSM 18197 / FERM 7344 / JCM 9153 / C-125) (Bacillus halodurans), this protein is Intracellular exo-alpha-(1-&gt;5)-L-arabinofuranosidase (abfA).